The following is a 267-amino-acid chain: B3 domain-containing protein Os02g0455800 (267 aa).

The TF-B3 DNA-binding region spans 30 to 131; that stretch reads EKFLMPSDLC…RLFICCRLGT (102 aa). Residues 172 to 221 are disordered; the sequence is QARLHDGNQDGGGAPSRHVPSSGRRVEAQLSRVSSRRQRRTMKHSIPEPT. Residues 205 to 214 are compositionally biased toward basic residues; it reads SSRRQRRTMK.

The protein resides in the nucleus. In Oryza sativa subsp. japonica (Rice), this protein is B3 domain-containing protein Os02g0455800.